The chain runs to 149 residues: Large ribosomal subunit protein bL9 (149 aa).

Belongs to the bacterial ribosomal protein bL9 family.

Binds to the 23S rRNA. The chain is Large ribosomal subunit protein bL9 from Legionella pneumophila subsp. pneumophila (strain Philadelphia 1 / ATCC 33152 / DSM 7513).